Here is a 1358-residue protein sequence, read N- to C-terminus: MGNQLAGIAPSQILSVESYFSDIHDFEYDKSLGSTRFFKVARAKHREGLVVVKVFAIQDPTLPLTSYKQELEELKIRLNSAQNCLPFQKASEKASEKAAMLFRQYVRDNLYDRISTRPFLNNIEKRWIAFQILTAVDQAHKSGVRHGDIKTENVMVTSWNWVLLTDFASFKPTYLPEDNPADFNYFFDTSRRRTCYIAPERFVDGGMFATELEYMRDPSTPLVDLNSNQRTRGELKRAMDIFSAGCVIAELFTEGVPLFDLSQLLAYRNGHFFPEQVLNKIEDHSIRELVTQMIHREPDKRLEAEDYLKQQRGNAFPEIFYTFLQPYMAQFAKETFLSADERILVIRKDLGNIIHNLCGHDLPEKAEGEPKENGLVILVSVITSCLQTLKYCDSKLAALELILHLAPRLSVEILLDRITPYLLHFSNDSVPRVRAEALRTLTKVLALVKEVPRNDINIYPEYILPGIAHLAQDDATIVRLAYAENIALLAETALRFLELVQLKNLNMENDPNNEEIDEVTHPNGNYDTELQALHEMVQQKVVTLLSDPENIVKQTLMENGITRLCVFFGRQKANDVLLSHMITFLNDKNDWHLRGAFFDSIVGVAAYVGWQSSSILKPLLQQGLSDAEEFVIVKALYALTCMCQLGLLQKPHVYEFASDIAPFLCHPNLWIRYGAVGFITVVARQISTADVYCKLMPYLDPYITQPIIQIERKLVLLSVLKEPVSRSIFDYALRSKDITSLFRHLHMRQKKRNGSLPDCPPPEDPAIAQLLKKLLSQGMTEEEEDKLLALKDFMMKSNKAKANIVDQSHLHDSSQKGVIDLAALGITGRQVDLVKTKQEPDDKRARKHVKQDSNVNEEWKSMFGSLDPPNMPQALPKGSDQEVIQTGKPPRSESSAGICVPLSTSSQVPEVTTVQNKKPVIPVLSSTILPSTYQIRITTCKTELQQLIQQKREQCNAERIAKQMMENAEWESKPPPPGWRPKGLLVAHLHEHKSAVNRIRVSDEHSLFATCSNDGTVKIWNSQKMEGKTTTTRSILTYSRIGGRVKTLTFCQGSHYLAIASDNGAVQLLGIEASKLPKSPKIHPLQSRILDQKEDGCVVDMHHFNSGAQSVLAYATVNGSLVGWDLRSSSNAWTLKHDLKSGLITSFAVDIHQCWLCIGTSSGTMACWDMRFQLPISSHCHPSRARIRRLSMHPLYQSWVIAAVQGNNEVSMWDMETGDRRFTLWASSAPPLSELQPSPHSVHGIYCSPADGNPILLTAGSDMKIRFWDLAYPERSYVVAGSTSSPSVSYYRKIIEGTEVVQEIQNKQKVGPSDDTPRRGPESLPVGHHDIITDVATFQTTQGFIVTASRDGIVKVWK.

A lipid anchor (N-myristoyl glycine) is attached at Gly-2. The 299-residue stretch at 26-324 (FEYDKSLGST…AFPEIFYTFL (299 aa)) folds into the Protein kinase domain. ATP contacts are provided by residues 32-40 (LGSTRFFKV) and Lys-53. The Proton acceptor role is filled by Asp-148. HEAT repeat units follow at residues 413-450 (ILLD…LVKE), 458-495 (IYPE…TALR), and 572-610 (KAND…YVGW). Ser-808, Ser-813, Ser-853, and Ser-865 each carry phosphoserine. A disordered region spans residues 875-898 (LPKGSDQEVIQTGKPPRSESSAGI). WD repeat units lie at residues 991–1030 (EHKS…GKTT), 1040–1079 (RIGG…LPKS), 1093–1134 (KEDG…NAWT), 1139–1178 (LKSG…PISS), 1182–1223 (PSRA…RRFT), and 1237–1278 (PSPH…RSYV). The segment at 1307-1326 (KQKVGPSDDTPRRGPESLPV) is disordered. Residues 1315-1326 (DTPRRGPESLPV) are compositionally biased toward basic and acidic residues. A Phosphothreonine modification is found at Thr-1316. The WD 7 repeat unit spans residues 1327-1358 (GHHDIITDVATFQTTQGFIVTASRDGIVKVWK).

Belongs to the protein kinase superfamily. Ser/Thr protein kinase family. Component of the PI3K (PI3KC3/PI3K-III/class III phosphatidylinositol 3-kinase) complex the core of which is composed of the catalytic subunit PIK3C3, the regulatory subunit PIK3R4 and BECN1 associating with additional regulatory/auxiliary subunits to form alternative complex forms. Alternative complex forms containing a fourth regulatory subunit in a mutually exclusive manner are PI3K complex I (PI3KC3-C1) containing ATG14, and PI3K complex II (PI3KC3-C2) containing UVRAG. PI3KC3-C1 displays a V-shaped architecture with PIK3R4 serving as a bridge between PIK3C3 and the ATG14:BECN1 subcomplex. Both, PI3KC3-C1 and PI3KC3-C2, can associate with further regulatory subunits, such as RUBCN, SH3GLB1/Bif-1, AMBRA1 and NRBF2. PI3KC3-C1 probably associates with PIK3CB. Interacts with RAB7A in the presence of PIK3C3/VPS34. Interacts with NRBF2. Interacts with ARMC3. Requires Mn(2+) as cofactor. In terms of processing, myristoylated. Probably autophosphorylated. In terms of tissue distribution, ubiquitously expressed.

It localises to the late endosome. Its subcellular location is the cytoplasmic vesicle. The protein resides in the autophagosome. The protein localises to the membrane. It catalyses the reaction L-seryl-[protein] + ATP = O-phospho-L-seryl-[protein] + ADP + H(+). The enzyme catalyses L-threonyl-[protein] + ATP = O-phospho-L-threonyl-[protein] + ADP + H(+). Regulatory subunit of the PI3K complex that mediates formation of phosphatidylinositol 3-phosphate; different complex forms are believed to play a role in multiple membrane trafficking pathways: PI3KC3-C1 is involved in initiation of autophagosomes and PI3KC3-C2 in maturation of autophagosomes and endocytosis. Involved in regulation of degradative endocytic trafficking and cytokinesis, probably in the context of PI3KC3-C2. The chain is Phosphoinositide 3-kinase regulatory subunit 4 (PIK3R4) from Homo sapiens (Human).